The primary structure comprises 1188 residues: DNA-directed RNA polymerase subunit beta (1188 aa).

This sequence belongs to the RNA polymerase beta chain family. As to quaternary structure, the RNAP catalytic core consists of 2 alpha, 1 beta, 1 beta' and 1 omega subunit. When a sigma factor is associated with the core the holoenzyme is formed, which can initiate transcription.

The catalysed reaction is RNA(n) + a ribonucleoside 5'-triphosphate = RNA(n+1) + diphosphate. In terms of biological role, DNA-dependent RNA polymerase catalyzes the transcription of DNA into RNA using the four ribonucleoside triphosphates as substrates. The protein is DNA-directed RNA polymerase subunit beta of Streptococcus equi subsp. equi (strain 4047).